The primary structure comprises 395 residues: Transcriptional coactivator yorkie (395 aa).

The interval 73 to 100 is disordered; sequence NSFFTPPAPSHSRANSADSTYDAGSQSS. 5 positions are modified to phosphoserine: Ser82, Ser88, Ser100, Ser117, and Ser145. A compositionally biased stretch (polar residues) spans 84–100; that stretch reads SRANSADSTYDAGSQSS. Disordered regions lie at residues 129–150 and 162–199; these read PSPQHSRLAIHHSRARSSPASL and AAAANNPNANPSSQQQPAGPTFPENSAQEFPSGAPASS. Phosphoserine; by CDK7 is present on Ser146. Ser149 carries the post-translational modification Phosphoserine. A compositionally biased stretch (low complexity) spans 162–179; the sequence is AAAANNPNANPSSQQQPA. Ser227 bears the Phosphoserine mark. Tyr228 is subject to Phosphotyrosine. Ser232 carries the phosphoserine modification. WW domains lie at 241-274 and 310-343; these read GALPPGWEQAKTNDGQIYYLNHTTKSTQWEDPRI and GPLPDGWEQAVTESGDLYFINHIDRTTSWNDPRM.

It belongs to the YAP1 family. In terms of assembly, interacts (via WW domains) with wts. Interacts (via N-terminus) with sd (via C-terminus) and this interaction enhances the transcriptional activity of sd. The phosphorylated form interacts with 14-3-3epsilon and 14-3-3zeta. Interacts with Ack and ex. In terms of processing, its activity is regulated by multiple phosphorylation events. Phosphorylation at Ser-88, Ser-145 and Ser-227 negatively regulate its activity and restrict its nuclear localization. Wts-mediated phosphorylation at Ser-145 promotes interaction with 14-3-3epsilon and 14-3-3zeta. Phosphorylation at Ser-88 and Ser-227 regulate nuclear localization and activity independent of 14-3-3 association. Phosphorylation at Ser-146 by Cdk7 promotes its stability by preventing ubiquitination by the DCX(DCAF12) complex. Ubiquitinated by the DCX(DCAF12) complex, leading to its degradation. Phosphorylation at Ser-146 by Cdk7 prevents ubiquitination by the DCX(DCAF12) complex.

It localises to the cytoplasm. The protein resides in the nucleus. Functionally, transcriptional coactivator which is the critical downstream regulatory target in the Hippo/SWH (Sav/Wts/Hpo) signaling pathway that plays a pivotal role in organ size control and tumor suppression by restricting proliferation and promoting apoptosis. The core of this pathway is composed of a kinase cascade wherein Hippo (Hpo), in complex with its regulatory protein Salvador (Sav), phosphorylates and activates Warts (Wts) in complex with its regulatory protein Mats, which in turn phosphorylates and inactivates the Yorkie (Yki) oncoprotein. The Hippo/SWH signaling pathway inhibits the activity of the transcriptional complex formed by Scalloped (sd) and Yki and the target genes of this pathway include cyclin-E (cycE), diap1 and bantam. Regulates the expression of G1/S-specific CycE and diap1, thereby promoting cell proliferation and inhibiting apoptosis. Required for transcriptional activity of sd in wing imaginal disks. Induces expression of expression of vestigial (vg) in wing and haltere disks and the expression of transcription factor E2f (E2f). This chain is Transcriptional coactivator yorkie (yki), found in Drosophila melanogaster (Fruit fly).